A 303-amino-acid chain; its full sequence is Methionyl-tRNA formyltransferase (303 aa).

A (6S)-5,6,7,8-tetrahydrofolate-binding site is contributed by 108–111 (SDLP).

This sequence belongs to the Fmt family.

It carries out the reaction L-methionyl-tRNA(fMet) + (6R)-10-formyltetrahydrofolate = N-formyl-L-methionyl-tRNA(fMet) + (6S)-5,6,7,8-tetrahydrofolate + H(+). Its function is as follows. Attaches a formyl group to the free amino group of methionyl-tRNA(fMet). The formyl group appears to play a dual role in the initiator identity of N-formylmethionyl-tRNA by promoting its recognition by IF2 and preventing the misappropriation of this tRNA by the elongation apparatus. This Rickettsia canadensis (strain McKiel) protein is Methionyl-tRNA formyltransferase.